We begin with the raw amino-acid sequence, 534 residues long: N-acetylglutamate synthase, mitochondrial (534 aa).

The transit peptide at 1–18 (MATALMAVVLRAAAVAPR) directs the protein to the mitochondrion. The tract at residues 19 to 99 (LRGRGGTGGA…HESPEPPSGR (81 aa)) is disordered. Positions 19–376 (LRGRGGTGGA…SGTLFKNAER (358 aa)) are amino-acid kinase domain (AAK). The segment covering 81–96 (VPSPRPPVPHESPEPP) has biased composition (pro residues). The 152-residue stretch at 375–526 (ERMLRVRSLD…HAKGLPDSFH (152 aa)) folds into the N-acetyltransferase domain. Substrate-binding positions include Lys401, Lys444, and 474-479 (RSRVTN).

The protein belongs to the acetyltransferase family. In terms of assembly, homodimer. Homotetramer. Post-translationally, probably processed by mitochondrial processing peptidase (MPP). The long form has not yet been isolated. As to expression, highly expressed in the adult liver, kidney and small intestine. Weakly expressed in the fetal liver, lung, pancreas, placenta, heart and brain tissue.

Its subcellular location is the mitochondrion matrix. It catalyses the reaction L-glutamate + acetyl-CoA = N-acetyl-L-glutamate + CoA + H(+). Its pathway is amino-acid biosynthesis; L-arginine biosynthesis; N(2)-acetyl-L-ornithine from L-glutamate: step 1/4. Increased by L-arginine. Plays a role in the regulation of ureagenesis by producing the essential cofactor N-acetylglutamate (NAG), thus modulating carbamoylphosphate synthase I (CPS1) activity. In Homo sapiens (Human), this protein is N-acetylglutamate synthase, mitochondrial (NAGS).